The primary structure comprises 291 residues: Ribosomal RNA small subunit methyltransferase H (291 aa).

S-adenosyl-L-methionine-binding positions include 25-27, aspartate 45, phenylalanine 73, aspartate 88, and glutamine 95; that span reads GGH.

The protein belongs to the methyltransferase superfamily. RsmH family.

It is found in the cytoplasm. It catalyses the reaction cytidine(1402) in 16S rRNA + S-adenosyl-L-methionine = N(4)-methylcytidine(1402) in 16S rRNA + S-adenosyl-L-homocysteine + H(+). In terms of biological role, specifically methylates the N4 position of cytidine in position 1402 (C1402) of 16S rRNA. This is Ribosomal RNA small subunit methyltransferase H from Flavobacterium psychrophilum (strain ATCC 49511 / DSM 21280 / CIP 103535 / JIP02/86).